The sequence spans 490 residues: Betaine aldehyde dehydrogenase (490 aa).

Residues Thr26, Ile27, and Asp93 each coordinate K(+). 150 to 152 (GAW) is a binding site for NAD(+). The active-site Charge relay system is the Lys162. An NAD(+)-binding site is contributed by 176 to 179 (KPSE). Val180 contacts K(+). 230-233 (GVAS) contacts NAD(+). Leu246 serves as a coordination point for K(+). The active-site Proton acceptor is Glu252. NAD(+)-binding residues include Gly254, Cys286, and Glu387. Cys286 functions as the Nucleophile in the catalytic mechanism. A Cysteine sulfenic acid (-SOH) modification is found at Cys286. The K(+) site is built by Lys457 and Gly460. The active-site Charge relay system is the Glu464.

This sequence belongs to the aldehyde dehydrogenase family. As to quaternary structure, dimer of dimers. Requires K(+) as cofactor.

It carries out the reaction betaine aldehyde + NAD(+) + H2O = glycine betaine + NADH + 2 H(+). Its pathway is amine and polyamine biosynthesis; betaine biosynthesis via choline pathway; betaine from betaine aldehyde: step 1/1. Involved in the biosynthesis of the osmoprotectant glycine betaine. Catalyzes the irreversible oxidation of betaine aldehyde to the corresponding acid. This Escherichia coli (strain SMS-3-5 / SECEC) protein is Betaine aldehyde dehydrogenase.